We begin with the raw amino-acid sequence, 240 residues long: 1-(5-phosphoribosyl)-5-[(5-phosphoribosylamino)methylideneamino] imidazole-4-carboxamide isomerase (240 aa).

The active-site Proton acceptor is the Asp8. The active-site Proton donor is Asp129.

This sequence belongs to the HisA/HisF family.

The protein resides in the cytoplasm. The enzyme catalyses 1-(5-phospho-beta-D-ribosyl)-5-[(5-phospho-beta-D-ribosylamino)methylideneamino]imidazole-4-carboxamide = 5-[(5-phospho-1-deoxy-D-ribulos-1-ylimino)methylamino]-1-(5-phospho-beta-D-ribosyl)imidazole-4-carboxamide. It participates in amino-acid biosynthesis; L-histidine biosynthesis; L-histidine from 5-phospho-alpha-D-ribose 1-diphosphate: step 4/9. This Clostridium beijerinckii (strain ATCC 51743 / NCIMB 8052) (Clostridium acetobutylicum) protein is 1-(5-phosphoribosyl)-5-[(5-phosphoribosylamino)methylideneamino] imidazole-4-carboxamide isomerase.